The sequence spans 753 residues: 5-methyltetrahydropteroyltriglutamate--homocysteine methyltransferase (753 aa).

Residues Arg17 to Lys20 and Lys117 each bind 5-methyltetrahydropteroyltri-L-glutamate. L-homocysteine is bound by residues Ile431 to Ser433 and Glu484. L-methionine contacts are provided by residues Ile431 to Ser433 and Glu484. 5-methyltetrahydropteroyltri-L-glutamate-binding positions include Arg515 to Cys516 and Trp561. Asp599 contacts L-homocysteine. Asp599 is an L-methionine binding site. Glu605 provides a ligand contact to 5-methyltetrahydropteroyltri-L-glutamate. Zn(2+)-binding residues include His641, Cys643, and Glu665. His694 acts as the Proton donor in catalysis. Position 726 (Cys726) interacts with Zn(2+).

Belongs to the vitamin-B12 independent methionine synthase family. It depends on Zn(2+) as a cofactor.

The catalysed reaction is 5-methyltetrahydropteroyltri-L-glutamate + L-homocysteine = tetrahydropteroyltri-L-glutamate + L-methionine. Its pathway is amino-acid biosynthesis; L-methionine biosynthesis via de novo pathway; L-methionine from L-homocysteine (MetE route): step 1/1. Catalyzes the transfer of a methyl group from 5-methyltetrahydrofolate to homocysteine resulting in methionine formation. In Escherichia coli O139:H28 (strain E24377A / ETEC), this protein is 5-methyltetrahydropteroyltriglutamate--homocysteine methyltransferase.